Here is an 880-residue protein sequence, read N- to C-terminus: Valine--tRNA ligase (880 aa).

A 'HIGH' region motif is present at residues 49-59 (PNVTGRLHLGH). Positions 525–529 (KMSKS) match the 'KMSKS' region motif. An ATP-binding site is contributed by lysine 528. Residues 809 to 879 (LEGLINIDEE…AVQKRMAELK (71 aa)) are a coiled coil.

It belongs to the class-I aminoacyl-tRNA synthetase family. ValS type 1 subfamily. Monomer.

Its subcellular location is the cytoplasm. The catalysed reaction is tRNA(Val) + L-valine + ATP = L-valyl-tRNA(Val) + AMP + diphosphate. In terms of biological role, as ValRS can inadvertently accommodate and process structurally similar amino acids such as threonine, to avoid such errors, it has a 'posttransfer' editing activity that hydrolyzes mischarged Thr-tRNA(Val) in a tRNA-dependent manner. Catalyzes the attachment of valine to tRNA(Val). The sequence is that of Valine--tRNA ligase from Bacillus subtilis (strain 168).